We begin with the raw amino-acid sequence, 82 residues long: uncharacterized protein (82 aa).

Transmembrane regions (helical) follow at residues 8–28 (LLSA…LPAP) and 50–70 (LYTV…YLVL).

Its subcellular location is the cell membrane. This is an uncharacterized protein from Klebsiella pneumoniae.